The chain runs to 145 residues: Nucleoside diphosphate kinase (145 aa).

The ATP site is built by K11, F59, R87, T93, R104, and N114. The active-site Pros-phosphohistidine intermediate is H117.

The protein belongs to the NDK family. In terms of assembly, homotetramer. Requires Mg(2+) as cofactor.

It localises to the cytoplasm. It catalyses the reaction a 2'-deoxyribonucleoside 5'-diphosphate + ATP = a 2'-deoxyribonucleoside 5'-triphosphate + ADP. The catalysed reaction is a ribonucleoside 5'-diphosphate + ATP = a ribonucleoside 5'-triphosphate + ADP. In terms of biological role, major role in the synthesis of nucleoside triphosphates other than ATP. The ATP gamma phosphate is transferred to the NDP beta phosphate via a ping-pong mechanism, using a phosphorylated active-site intermediate. This chain is Nucleoside diphosphate kinase, found in Myxococcus xanthus.